The sequence spans 301 residues: Bifunctional protein FolD (301 aa).

NADP(+) is bound by residues glycine 166–serine 168, serine 191, and isoleucine 232.

It belongs to the tetrahydrofolate dehydrogenase/cyclohydrolase family. Homodimer.

It carries out the reaction (6R)-5,10-methylene-5,6,7,8-tetrahydrofolate + NADP(+) = (6R)-5,10-methenyltetrahydrofolate + NADPH. The enzyme catalyses (6R)-5,10-methenyltetrahydrofolate + H2O = (6R)-10-formyltetrahydrofolate + H(+). Its pathway is one-carbon metabolism; tetrahydrofolate interconversion. Functionally, catalyzes the oxidation of 5,10-methylenetetrahydrofolate to 5,10-methenyltetrahydrofolate and then the hydrolysis of 5,10-methenyltetrahydrofolate to 10-formyltetrahydrofolate. The protein is Bifunctional protein FolD of Orientia tsutsugamushi (strain Ikeda) (Rickettsia tsutsugamushi).